Reading from the N-terminus, the 296-residue chain is 4-hydroxy-tetrahydrodipicolinate synthase (296 aa).

Residue Thr-49 coordinates pyruvate. Catalysis depends on Tyr-137, which acts as the Proton donor/acceptor. Catalysis depends on Lys-166, which acts as the Schiff-base intermediate with substrate. Ile-208 serves as a coordination point for pyruvate.

Belongs to the DapA family. Homotetramer; dimer of dimers.

It localises to the cytoplasm. The catalysed reaction is L-aspartate 4-semialdehyde + pyruvate = (2S,4S)-4-hydroxy-2,3,4,5-tetrahydrodipicolinate + H2O + H(+). Its pathway is amino-acid biosynthesis; L-lysine biosynthesis via DAP pathway; (S)-tetrahydrodipicolinate from L-aspartate: step 3/4. In terms of biological role, catalyzes the condensation of (S)-aspartate-beta-semialdehyde [(S)-ASA] and pyruvate to 4-hydroxy-tetrahydrodipicolinate (HTPA). This chain is 4-hydroxy-tetrahydrodipicolinate synthase, found in Chlorobaculum parvum (strain DSM 263 / NCIMB 8327) (Chlorobium vibrioforme subsp. thiosulfatophilum).